A 310-amino-acid chain; its full sequence is Malate dehydrogenase (310 aa).

Residues 7–12 (GAGNVG) and D32 each bind NAD(+). Residues R81 and R87 each coordinate substrate. NAD(+)-binding positions include N94 and 117–119 (VSN). N119 and R150 together coordinate substrate. Catalysis depends on H174, which acts as the Proton acceptor.

It belongs to the LDH/MDH superfamily. MDH type 3 family.

The catalysed reaction is (S)-malate + NAD(+) = oxaloacetate + NADH + H(+). Catalyzes the reversible oxidation of malate to oxaloacetate. The chain is Malate dehydrogenase from Chlorobium chlorochromatii (strain CaD3).